Here is a 430-residue protein sequence, read N- to C-terminus: Trigger factor (430 aa).

A PPIase FKBP-type domain is found at 157–242; sequence GDLVALETWS…AVEVSEPVLP (86 aa).

Belongs to the FKBP-type PPIase family. Tig subfamily.

It localises to the cytoplasm. It catalyses the reaction [protein]-peptidylproline (omega=180) = [protein]-peptidylproline (omega=0). Involved in protein export. Acts as a chaperone by maintaining the newly synthesized protein in an open conformation. Functions as a peptidyl-prolyl cis-trans isomerase. The sequence is that of Trigger factor from Xanthomonas axonopodis pv. citri (strain 306).